We begin with the raw amino-acid sequence, 87 residues long: HssA/B-like protein 7 (87 aa).

Positions 1–22 (MSILSALTSISNPMKSTKSSVA) are enriched in polar residues. Residues 1–23 (MSILSALTSISNPMKSTKSSVAN) form a disordered region.

This sequence belongs to the hssA/B family.

In Dictyostelium discoideum (Social amoeba), this protein is HssA/B-like protein 7 (hssl7).